Reading from the N-terminus, the 220-residue chain is DNA mismatch repair protein MutH (220 aa).

This sequence belongs to the MutH family.

Its subcellular location is the cytoplasm. In terms of biological role, sequence-specific endonuclease that cleaves unmethylated GATC sequences. It is involved in DNA mismatch repair. The protein is DNA mismatch repair protein MutH of Buchnera aphidicola subsp. Baizongia pistaciae (strain Bp).